Reading from the N-terminus, the 339-residue chain is 4-hydroxy-2-oxovalerate aldolase 3 (339 aa).

A Pyruvate carboxyltransferase domain is found at isoleucine 7–alanine 259. Residue arginine 15–aspartate 16 coordinates substrate. Aspartate 16 provides a ligand contact to Mn(2+). Histidine 19 acts as the Proton acceptor in catalysis. Residues serine 169 and histidine 198 each coordinate substrate. 2 residues coordinate Mn(2+): histidine 198 and histidine 200. Tyrosine 289 is a substrate binding site.

This sequence belongs to the 4-hydroxy-2-oxovalerate aldolase family.

It carries out the reaction (S)-4-hydroxy-2-oxopentanoate = acetaldehyde + pyruvate. In Rhodococcus opacus (strain B4), this protein is 4-hydroxy-2-oxovalerate aldolase 3.